Reading from the N-terminus, the 316-residue chain is Myb-related protein 306 (316 aa).

2 HTH myb-type domains span residues 9-65 (KIGV…RPGI) and 66-116 (KRGD…KKKL). 2 DNA-binding regions (H-T-H motif) span residues 37-61 (WRAI…TNYL) and 89-112 (WAAI…NTHL). Disordered regions lie at residues 119-144 (LQSP…SKGQ), 168-193 (KTSS…QAST), and 209-230 (KKSP…TTTS). The segment covering 135-144 (DSDKSVSKGQ) has biased composition (basic and acidic residues). Positions 181–193 (VQTTQPRPFQAST) are enriched in polar residues. The segment covering 216–230 (SSTSQAGSSESTTTS) has biased composition (low complexity).

In terms of tissue distribution, expressed in flowers, leaves and weakly in seed pods.

It localises to the nucleus. In terms of biological role, transcription factor. In Antirrhinum majus (Garden snapdragon), this protein is Myb-related protein 306.